The following is a 78-amino-acid chain: Large ribosomal subunit protein bL28 (78 aa).

A disordered region spans residues 1-25; the sequence is MSRVCQVTGKRPTVGNNRSHAKNAT.

The protein belongs to the bacterial ribosomal protein bL28 family.

The sequence is that of Large ribosomal subunit protein bL28 from Tolumonas auensis (strain DSM 9187 / NBRC 110442 / TA 4).